We begin with the raw amino-acid sequence, 126 residues long: Protein mmf2, mitochondrial (126 aa).

The protein belongs to the RutC family.

Its subcellular location is the mitochondrion. It is found in the cytoplasm. Plays a role in the maintenance of mitochondrial DNA. In Schizosaccharomyces pombe (strain 972 / ATCC 24843) (Fission yeast), this protein is Protein mmf2, mitochondrial (mmf2).